A 645-amino-acid polypeptide reads, in one-letter code: Chlorophyllide a oxygenase, chloroplastic (645 aa).

The tract at residues 1–46 is disordered; the sequence is MLPASLQRKAAAVGGRGPTNQSRVAVRVSAQPKEAPPASTPIVEDP. Positions 105–218 form a coiled coil; that stretch reads QARQKLEYLR…RKASDLDIKE (114 aa). Positions 258–287 are disordered; the sequence is ATTVTQEVPSTSYGTPVDRAPRRSKAAIRR. Over residues 259 to 271 the composition is skewed to polar residues; that stretch reads TTVTQEVPSTSYG. The Rieske domain maps to 305–406; the sequence is WYPAEFSARL…CAEKDGFIWV (102 aa). [2Fe-2S] cluster contacts are provided by C346, H348, C365, and H368. Residues E446, D450, H453, and H458 each contribute to the Fe cation site.

Its subcellular location is the plastid. The protein localises to the chloroplast inner membrane. The protein resides in the chloroplast thylakoid membrane. It carries out the reaction chlorophyllide a + 2 NADPH + 2 O2 + 2 H(+) = chlorophyllide b + 2 NADP(+) + 3 H2O. Catalyzes a two-step oxygenase reaction involved in the synthesis of chlorophyll b. Acts specifically on the non-esterified chlorophyllide a and not on chlorophyll a. The protein is Chlorophyllide a oxygenase, chloroplastic (CAO) of Chlamydomonas reinhardtii (Chlamydomonas smithii).